A 163-amino-acid chain; its full sequence is Calmodulin (163 aa).

Position 2 is an N-acetylalanine (Ala2). 4 consecutive EF-hand domains span residues 11-46, 47-82, 84-119, and 120-155; these read EQIA…LGQN, PTEA…KMKE, DHED…LGEK, and LSEE…GATD. The Ca(2+) site is built by Asp24, Asp26, Asp28, Thr30, Glu35, Asp60, Asp62, Asn64, Thr66, Glu71, Asp97, Asp99, Asn101, Glu108, Asp133, Asp135, Asp137, Gln139, and Glu144.

Belongs to the calmodulin family. In terms of assembly, associates with the spoke-associated complex containing CFAP61, CFAP91 and CFAP251; the association is calcium sensitive. In terms of processing, trimethylation of Lys-119 observed in other calmodulins is absent here.

It is found in the cytoplasm. Its subcellular location is the cytoskeleton. The protein resides in the flagellum axoneme. Functionally, calmodulin mediates the control of a large number of enzymes, ion channels and other proteins by Ca(2+). Among the enzymes to be stimulated by the calmodulin-Ca(2+) complex are a number of protein kinases and phosphatases. The sequence is that of Calmodulin from Chlamydomonas reinhardtii (Chlamydomonas smithii).